Reading from the N-terminus, the 406-residue chain is Probable mannan endo-1,4-beta-mannosidase C (406 aa).

The N-terminal stretch at 1–20 is a signal peptide; that stretch reads MLINFEKVLSLALLAGSVSG. Asparagine 58 carries N-linked (GlcNAc...) asparagine glycosylation. Tryptophan 80 provides a ligand contact to substrate. N-linked (GlcNAc...) asparagine glycosylation is found at asparagine 86 and asparagine 114. Position 201 (asparagine 201) interacts with substrate. Glutamate 202 functions as the Proton donor in the catalytic mechanism. A substrate-binding site is contributed by tyrosine 287. Glutamate 320 (nucleophile) is an active-site residue. Asparagine 338 is a glycosylation site (N-linked (GlcNAc...) asparagine). Tryptophan 362 is a substrate binding site.

Belongs to the glycosyl hydrolase 5 (cellulase A) family.

Its subcellular location is the secreted. It carries out the reaction Random hydrolysis of (1-&gt;4)-beta-D-mannosidic linkages in mannans, galactomannans and glucomannans.. Endo-1,4-mannanase, a crucial enzyme for depolymerization of seed galactomannans and wood galactoglucomannans. The polypeptide is Probable mannan endo-1,4-beta-mannosidase C (manC) (Aspergillus terreus (strain NIH 2624 / FGSC A1156)).